A 588-amino-acid chain; its full sequence is Adenine deaminase (588 aa).

Belongs to the metallo-dependent hydrolases superfamily. Adenine deaminase family. As to quaternary structure, homodimer. Mn(2+) serves as cofactor.

It catalyses the reaction adenine + H2O + H(+) = hypoxanthine + NH4(+). In Shigella flexneri, this protein is Adenine deaminase.